Here is a 400-residue protein sequence, read N- to C-terminus: Glutamyl-tRNA reductase (400 aa).

Residues 45 to 48 (TCNR), S103, 108 to 110 (EDQ), and Q114 each bind substrate. The active-site Nucleophile is C46. 179–184 (GYGEIG) provides a ligand contact to NADP(+).

It belongs to the glutamyl-tRNA reductase family. Homodimer.

It catalyses the reaction (S)-4-amino-5-oxopentanoate + tRNA(Glu) + NADP(+) = L-glutamyl-tRNA(Glu) + NADPH + H(+). Its pathway is porphyrin-containing compound metabolism; protoporphyrin-IX biosynthesis; 5-aminolevulinate from L-glutamyl-tRNA(Glu): step 1/2. Functionally, catalyzes the NADPH-dependent reduction of glutamyl-tRNA(Glu) to glutamate 1-semialdehyde (GSA). This chain is Glutamyl-tRNA reductase, found in Clostridium perfringens (strain SM101 / Type A).